The primary structure comprises 524 residues: Methylmalonyl-CoA carboxyltransferase 12S subunit (524 aa).

One can recognise a CoA carboxyltransferase N-terminal domain in the interval 13 to 268 (MEGRVEQLAE…NNTEEASFVN (256 aa)). The segment at 13–506 (MEGRVEQLAE…RRKIASALEM (494 aa)) is carboxyltransferase. One can recognise a CoA carboxyltransferase C-terminal domain in the interval 274–506 (SPNTELRDIV…RRKIASALEM (233 aa)).

As to quaternary structure, homohexamer. Transcarboxylase is composed of three subunits: 1.3S, 5S, and 12S. The core of the enzyme is composed of six 12S subunits. On each side of the core there are three pairs of 5S subunits. Each 5S dimer is attached to the core by two 1.3S subunits. Thus the total number of chains is 30 (6 + 12 + 12).

It carries out the reaction (S)-methylmalonyl-CoA + pyruvate = propanoyl-CoA + oxaloacetate. Its function is as follows. The 12S subunit specifically catalyzes the transfer of the carboxyl group of methylmalonyl CoA to the biotin of the 1.3S subunit forming propanoyl-CoA and carboxylated 1.3S-biotin. The protein is Methylmalonyl-CoA carboxyltransferase 12S subunit of Propionibacterium freudenreichii subsp. shermanii.